A 431-amino-acid chain; its full sequence is Large envelope protein (431 aa).

Gly2 is lipidated: N-myristoyl glycine; by host. Residues 2-148 form a pre-S1 region; it reads GNNIKVTFNP…PPLRDTHPHL (147 aa). Positions 2–207 are pre-S; sequence GNNIKVTFNP…PSTTGDPALS (206 aa). The Virion surface; in external conformation portion of the chain corresponds to 2-214; that stretch reads GNNIKVTFNP…ALSPEMSPSS (213 aa). The Intravirion; in internal conformation segment spans residues 2–286; the sequence is GNNIKVTFNP…NGFRWMYLRR (285 aa). Asn3 carries N-linked (GlcNAc...) asparagine glycosylation. The tract at residues 115 to 146 is disordered; that stretch reads IPRGLVPPQTPTNRDQGRKPTPPTPPLRDTHP. A pre-S2 region spans residues 149 to 207; sequence TMKNQTFRLQGFVDGLRDLTTTERYHNAYGDPFTTLSPVVPTVSTILSPPSTTGDPALS. A helical membrane pass occupies residues 215 to 235; that stretch reads LLGLLAGLQVVYFLWTKILTI. Topologically, residues 236–286 are intravirion; in external conformation; it reads AQNLDWWWTSLSFPGGIPECTGQNSQFQTCKHLPTSCPPTCNGFRWMYLRR. Residues 287–307 form a helical membrane-spanning segment; that stretch reads FIIYLLVLLLCLIFLLVLLDW. The Virion surface segment spans residues 308-379; that stretch reads KGLIPVCPLQ…WALARFSWLN (72 aa). N-linked (GlcNAc...) asparagine; by host glycosylation occurs at Asn351. The chain crosses the membrane as a helical span at residues 380 to 400; the sequence is LLVPLLQWLGGISLIAWFLLI. Residues 401-406 are Intravirion-facing; that stretch reads WMIWFW. The chain crosses the membrane as a helical span at residues 407 to 429; sequence GPALLSILPPFIPIFVLFFLIWV. Over 430–431 the chain is Virion surface; it reads YI.

The protein belongs to the orthohepadnavirus major surface antigen family. In terms of assembly, in its internal form (Li-HBsAg), interacts with the capsid protein and with the isoform S. Interacts with host chaperone CANX. Associates with host chaperone CANX through its pre-S2 N glycan; this association may be essential for isoform M proper secretion. As to quaternary structure, interacts with isoform L. Interacts with the antigens of satellite virus HDV (HDVAgs); this interaction is required for encapsidation of HDV genomic RNA. In terms of processing, isoform M is N-terminally acetylated by host at a ratio of 90%, and N-glycosylated by host at the pre-S2 region. Myristoylated.

The protein localises to the virion membrane. Its function is as follows. The large envelope protein exists in two topological conformations, one which is termed 'external' or Le-HBsAg and the other 'internal' or Li-HBsAg. In its external conformation the protein attaches the virus to cell receptors and thereby initiating infection. This interaction determines the species specificity and liver tropism. This attachment induces virion internalization predominantly through caveolin-mediated endocytosis. The large envelope protein also assures fusion between virion membrane and endosomal membrane. In its internal conformation the protein plays a role in virion morphogenesis and mediates the contact with the nucleocapsid like a matrix protein. The middle envelope protein plays an important role in the budding of the virion. It is involved in the induction of budding in a nucleocapsid independent way. In this process the majority of envelope proteins bud to form subviral lipoprotein particles of 22 nm of diameter that do not contain a nucleocapsid. In Woodchuck hepatitis B virus (isolate 59) (WHV), this protein is Large envelope protein.